The sequence spans 98 residues: Large ribosomal subunit protein eL21 (98 aa).

Residues 1-24 (MVKKAHSFRRKTRGKLSKHPRRRG) are compositionally biased toward basic residues. Residues 1–27 (MVKKAHSFRRKTRGKLSKHPRRRGLPP) form a disordered region.

This sequence belongs to the eukaryotic ribosomal protein eL21 family. Part of the 50S ribosomal subunit.

The sequence is that of Large ribosomal subunit protein eL21 from Thermococcus kodakarensis (strain ATCC BAA-918 / JCM 12380 / KOD1) (Pyrococcus kodakaraensis (strain KOD1)).